Here is a 360-residue protein sequence, read N- to C-terminus: Phospho-N-acetylmuramoyl-pentapeptide-transferase (360 aa).

The next 10 membrane-spanning stretches (helical) occupy residues 26 to 46, 73 to 93, 98 to 118, 132 to 152, 168 to 188, 199 to 219, 236 to 256, 263 to 283, 288 to 308, and 338 to 358; these read SIMA…KVIN, TMGG…WADL, VWFT…DDYW, WKYF…YAMG, VMPQ…VGTS, GLAI…AWAT, SGEL…FLWY, VFMG…IAVL, LLLL…ILQV, and VIVR…VTLK.

This sequence belongs to the glycosyltransferase 4 family. MraY subfamily. Requires Mg(2+) as cofactor.

Its subcellular location is the cell inner membrane. It catalyses the reaction UDP-N-acetyl-alpha-D-muramoyl-L-alanyl-gamma-D-glutamyl-meso-2,6-diaminopimeloyl-D-alanyl-D-alanine + di-trans,octa-cis-undecaprenyl phosphate = di-trans,octa-cis-undecaprenyl diphospho-N-acetyl-alpha-D-muramoyl-L-alanyl-D-glutamyl-meso-2,6-diaminopimeloyl-D-alanyl-D-alanine + UMP. It participates in cell wall biogenesis; peptidoglycan biosynthesis. Its function is as follows. Catalyzes the initial step of the lipid cycle reactions in the biosynthesis of the cell wall peptidoglycan: transfers peptidoglycan precursor phospho-MurNAc-pentapeptide from UDP-MurNAc-pentapeptide onto the lipid carrier undecaprenyl phosphate, yielding undecaprenyl-pyrophosphoryl-MurNAc-pentapeptide, known as lipid I. This chain is Phospho-N-acetylmuramoyl-pentapeptide-transferase, found in Haemophilus ducreyi (strain 35000HP / ATCC 700724).